A 413-amino-acid polypeptide reads, in one-letter code: Imidazolonepropionase (413 aa).

The Fe(3+) site is built by histidine 77 and histidine 79. Zn(2+) is bound by residues histidine 77 and histidine 79. Positions 86, 149, and 182 each coordinate 4-imidazolone-5-propanoate. An N-formimidoyl-L-glutamate-binding site is contributed by tyrosine 149. Fe(3+) is bound at residue histidine 247. Histidine 247 serves as a coordination point for Zn(2+). 4-imidazolone-5-propanoate is bound at residue glutamine 250. Aspartate 322 is a Fe(3+) binding site. Aspartate 322 serves as a coordination point for Zn(2+). 2 residues coordinate N-formimidoyl-L-glutamate: asparagine 324 and glycine 326. A 4-imidazolone-5-propanoate-binding site is contributed by threonine 327.

This sequence belongs to the metallo-dependent hydrolases superfamily. HutI family. Requires Zn(2+) as cofactor. It depends on Fe(3+) as a cofactor.

The protein resides in the cytoplasm. The enzyme catalyses 4-imidazolone-5-propanoate + H2O = N-formimidoyl-L-glutamate. Its pathway is amino-acid degradation; L-histidine degradation into L-glutamate; N-formimidoyl-L-glutamate from L-histidine: step 3/3. In terms of biological role, catalyzes the hydrolytic cleavage of the carbon-nitrogen bond in imidazolone-5-propanoate to yield N-formimidoyl-L-glutamate. It is the third step in the universal histidine degradation pathway. The polypeptide is Imidazolonepropionase (Chromobacterium violaceum (strain ATCC 12472 / DSM 30191 / JCM 1249 / CCUG 213 / NBRC 12614 / NCIMB 9131 / NCTC 9757 / MK)).